Consider the following 509-residue polypeptide: 2-isopropylmalate synthase (509 aa).

The 263-residue stretch at 5 to 267 (IQIFDTTLRD…QTALNLEETK (263 aa)) folds into the Pyruvate carboxyltransferase domain. Residues aspartate 14, histidine 202, histidine 204, and asparagine 238 each contribute to the Mn(2+) site. A regulatory domain region spans residues 391 to 509 (KLETLQLQYV…AAENVEKVGN (119 aa)).

This sequence belongs to the alpha-IPM synthase/homocitrate synthase family. LeuA type 1 subfamily. As to quaternary structure, homodimer. Requires Mn(2+) as cofactor.

It is found in the cytoplasm. The enzyme catalyses 3-methyl-2-oxobutanoate + acetyl-CoA + H2O = (2S)-2-isopropylmalate + CoA + H(+). It functions in the pathway amino-acid biosynthesis; L-leucine biosynthesis; L-leucine from 3-methyl-2-oxobutanoate: step 1/4. Catalyzes the condensation of the acetyl group of acetyl-CoA with 3-methyl-2-oxobutanoate (2-ketoisovalerate) to form 3-carboxy-3-hydroxy-4-methylpentanoate (2-isopropylmalate). This chain is 2-isopropylmalate synthase, found in Staphylococcus aureus (strain Mu3 / ATCC 700698).